The primary structure comprises 461 residues: Phosphomethylpyrimidine synthase (461 aa).

Substrate contacts are provided by residues Asn-81, Met-110, Tyr-140, His-176, 196-198 (SRG), 237-240 (DSLR), and Glu-276. A Zn(2+)-binding site is contributed by His-280. Substrate is bound at residue Tyr-303. Position 344 (His-344) interacts with Zn(2+). The [4Fe-4S] cluster site is built by Cys-424, Cys-427, and Cys-432.

This sequence belongs to the ThiC family. The cofactor is [4Fe-4S] cluster.

The catalysed reaction is 5-amino-1-(5-phospho-beta-D-ribosyl)imidazole + S-adenosyl-L-methionine = 4-amino-2-methyl-5-(phosphooxymethyl)pyrimidine + CO + 5'-deoxyadenosine + formate + L-methionine + 3 H(+). The protein operates within cofactor biosynthesis; thiamine diphosphate biosynthesis. Functionally, catalyzes the synthesis of the hydroxymethylpyrimidine phosphate (HMP-P) moiety of thiamine from aminoimidazole ribotide (AIR) in a radical S-adenosyl-L-methionine (SAM)-dependent reaction. In Thermosynechococcus vestitus (strain NIES-2133 / IAM M-273 / BP-1), this protein is Phosphomethylpyrimidine synthase.